The primary structure comprises 798 residues: RNA cytosine-C(5)-methyltransferase NSUN2 (798 aa).

Over residues 1 to 13 the composition is skewed to basic residues; sequence MGRRNRRNRQRHQ. The interval 1 to 30 is disordered; it reads MGRRNRRNRQRHQRSTEQRSPAEEEQRRKA. Residues 14–30 show a composition bias toward basic and acidic residues; sequence RSTEQRSPAEEEQRRKA. S-adenosyl-L-methionine-binding positions include 186 to 192, D217, D244, and D270; that span reads CAAPGSK. The Nucleophile role is filled by C323. Disordered stretches follow at residues 476-499 and 723-798; these read DEPA…SSKT and KACD…ESVD. Residues 723–747 show a composition bias toward basic and acidic residues; the sequence is KACDEEHIDEKMDIDGAKEESKELS. Residues 751–762 show a composition bias toward acidic residues; the sequence is SGDDEDPKEEDV. Basic and acidic residues predominate over residues 763–772; that stretch reads IDRGVLEHVA.

This sequence belongs to the class I-like SAM-binding methyltransferase superfamily. RsmB/NOP family. TRM4 subfamily.

It localises to the nucleus. The protein resides in the nucleolus. Its subcellular location is the cytoplasm. It is found in the mitochondrion. The protein localises to the cytoskeleton. It localises to the spindle. The protein resides in the secreted. Its subcellular location is the extracellular exosome. The catalysed reaction is cytidine(48) in tRNA + S-adenosyl-L-methionine = 5-methylcytidine(48) in tRNA + S-adenosyl-L-homocysteine + H(+). The enzyme catalyses cytidine(49) in tRNA + S-adenosyl-L-methionine = 5-methylcytidine(49) in tRNA + S-adenosyl-L-homocysteine + H(+). It catalyses the reaction cytidine(50) in tRNA + S-adenosyl-L-methionine = 5-methylcytidine(50) in tRNA + S-adenosyl-L-homocysteine + H(+). It carries out the reaction cytidine(34) in tRNA precursor + S-adenosyl-L-methionine = 5-methylcytidine(34) in tRNA precursor + S-adenosyl-L-homocysteine + H(+). The catalysed reaction is a cytidine in mRNA + S-adenosyl-L-methionine = a 5-methylcytidine in mRNA + S-adenosyl-L-homocysteine + H(+). Functionally, RNA cytosine C(5)-methyltransferase that methylates cytosine to 5-methylcytosine (m5C) in various RNAs, such as tRNAs, mRNAs and some long non-coding RNAs (lncRNAs). Involved in various processes, such as epidermal stem cell differentiation, testis differentiation and maternal to zygotic transition during early development: acts by increasing protein synthesis; cytosine C(5)-methylation promoting tRNA stability and preventing mRNA decay. Methylates cytosine to 5-methylcytosine (m5C) at positions 34 and 48 of intron-containing tRNA(Leu)(CAA) precursors, and at positions 48, 49 and 50 of tRNA(Gly)(GCC) precursors. tRNA methylation is required generation of RNA fragments derived from tRNAs (tRFs). Also mediates C(5)-methylation of mitochondrial tRNAs. Catalyzes cytosine C(5)-methylation of mRNAs, leading to stabilize them and prevent mRNA decay. Cytosine C(5)-methylation of mRNAs also regulates mRNA export. Also mediates cytosine C(5)-methylation of non-coding RNAs, such as vault RNAs (vtRNAs), promoting their processing into regulatory small RNAs. Required for proper spindle assembly and chromosome segregation, independently of its methyltransferase activity. This chain is RNA cytosine-C(5)-methyltransferase NSUN2, found in Xenopus tropicalis (Western clawed frog).